A 506-amino-acid chain; its full sequence is MVVREYNEELKYIEKISPNSYLIKKGFQPNMNVEGIFYANSKLERLMFDELRNSCRPGMTGGFLPGVKQIANVAALPGIVGRSVGLPDIHSGYGFAIGNMAAFDMSNPVSIVSPGGVGFDINCGVRLLRTNLFEKDVKPVQEQLAQSLFDHIPVGVGSKGIIPMNAHDLEEALEMGMDWSLREGYVWAEDKEHCEEYGRMLNADPSKVSMRAKKRGLPQLGTLGAGNHYAEIQVVEEIYDKFAASKMGIEELGQICVMIHSGSRGFGHQVATDALVEMEKAMKRDKIETNDRQLACARINSVEGQNYLKAMAAAANFAWVNRSSMTFLTRQAFAKQFNTTPDDLDMHVIYDVSHNVAKMEEHMVDGRPKQLLVHRKGSTRALPPHHPLIPVDYQLTGQPVLIGGSMGTCSFVLTGTEKGMAATFGSTCHGAGRSLSRAKSRRNLDYKDVLRDLEAKGIAIRVASPKLVQEEAPDSYKDVRDVVQTCHDVGISAKAIKLRPIAVIKG.

Mn(2+)-binding residues include Asp-120, Cys-123, His-228, His-260, and His-354. 227–231 contacts GMP; sequence NHYAE. Residues 354 to 355, 403 to 406, Ser-410, 429 to 432, and Lys-505 each bind GMP; these read HN, GGSM, and HGAG. His-429 functions as the GMP-histidine intermediate in the catalytic mechanism.

It belongs to the RtcB family. Catalytic component of the tRNA-splicing ligase complex. Mn(2+) serves as cofactor.

It carries out the reaction a 3'-end 3'-phospho-ribonucleotide-RNA + a 5'-end dephospho-ribonucleoside-RNA + GTP = a ribonucleotidyl-ribonucleotide-RNA + GMP + diphosphate. The catalysed reaction is a 3'-end 2',3'-cyclophospho-ribonucleotide-RNA + a 5'-end dephospho-ribonucleoside-RNA + GTP + H2O = a ribonucleotidyl-ribonucleotide-RNA + GMP + diphosphate + H(+). In terms of biological role, catalytic subunit of the tRNA-splicing ligase complex that acts by directly joining spliced tRNA halves to mature-sized tRNAs by incorporating the precursor-derived splice junction phosphate into the mature tRNA as a canonical 3',5'-phosphodiester. May act as an RNA ligase with broad substrate specificity, and may function toward other RNAs. The chain is RNA-splicing ligase RtcB homolog from Aedes aegypti (Yellowfever mosquito).